A 93-amino-acid chain; its full sequence is Small ribosomal subunit protein uS19c (93 aa).

Belongs to the universal ribosomal protein uS19 family.

It is found in the plastid. The protein localises to the chloroplast. Functionally, protein S19 forms a complex with S13 that binds strongly to the 16S ribosomal RNA. In Oryza nivara (Indian wild rice), this protein is Small ribosomal subunit protein uS19c.